The primary structure comprises 419 residues: ADIPOR-like receptor IZH3 (419 aa).

The segment at 1–65 (MSHPNTHMPR…GEAGGGRSVL (65 aa)) is disordered. Topologically, residues 1–147 (MSHPNTHMPR…LNAYGWHNET (147 aa)) are lumenal. An N-linked (GlcNAc...) asparagine glycan is attached at Asn145. A helical transmembrane segment spans residues 148–168 (INIWSHLVGAAVLAYLLCWGW). Residues 169 to 184 (PRSDVYRAAQVPRLAK) lie on the Cytoplasmic side of the membrane. The chain crosses the membrane as a helical span at residues 185-205 (WAIGAFLACGVKCMASSVAWH). Residues 206–225 (TFNGTCHLKLRSRFVCVDYT) lie on the Lumenal side of the membrane. N-linked (GlcNAc...) asparagine glycosylation occurs at Asn208. A helical transmembrane segment spans residues 226–246 (GITLLVTASVVTTVAVTLYGL). The Cytoplasmic portion of the chain corresponds to 247 to 249 (SRP). A helical membrane pass occupies residues 250 to 270 (LMYAYMVASIGLGTAAGVMNW). At 271-283 (SPHFDRPEARPLR) the chain is on the lumenal side. The helical transmembrane segment at 284–304 (IAVYVGLAALGLVSFVHVWMQ) threads the bilayer. Topologically, residues 305–311 (VRWASAH) are cytoplasmic. The chain crosses the membrane as a helical span at residues 312–332 (LMAPLVYKSLVWYGIGVVFYA). Residues 333–377 (TLVPERWRSDVTLDCCSGPVHEAACRQFRDLPPVARKDRQFWSLW) lie on the Lumenal side of the membrane. A helical transmembrane segment spans residues 378 to 398 (WVDYFCHSHFLWHVFVVLGVV). The Cytoplasmic segment spans residues 399–419 (GHYRAVLQMSRIVWLDAGRAF).

The protein belongs to the ADIPOR family.

The protein resides in the endoplasmic reticulum membrane. ADIPOR-like receptor involved in zinc metabolism either by altering membrane sterol content or by directly altering cellular zinc levels. This is ADIPOR-like receptor IZH3 (IZH3) from Eremothecium gossypii (strain ATCC 10895 / CBS 109.51 / FGSC 9923 / NRRL Y-1056) (Yeast).